Reading from the N-terminus, the 154-residue chain is 8-oxo-dGTP diphosphatase (154 aa).

The region spanning 1 to 129 is the Nudix hydrolase domain; it reads MPQLATICYI…DHTFVEWLLE (129 aa). Mg(2+)-binding residues include glycine 38, glutamate 53, glutamate 56, and glutamate 57. The Nudix box signature appears at 38-59; it reads GKLERGETPQECAAREILEETG.

This sequence belongs to the Nudix hydrolase family. As to quaternary structure, homotrimer. The cofactor is Mg(2+).

It carries out the reaction 8-oxo-dGTP + H2O = 8-oxo-dGMP + diphosphate + H(+). Its function is as follows. Involved in the DNA repair system to avoid A.T to G.C transversions. Degrades 8-oxo-dGTP to the monophosphate, but is also active on all of the nucleoside triphosphates. This Streptococcus pneumoniae serotype 4 (strain ATCC BAA-334 / TIGR4) protein is 8-oxo-dGTP diphosphatase (mutX).